We begin with the raw amino-acid sequence, 346 residues long: Histidinol-phosphate aminotransferase (346 aa).

Lys-209 is subject to N6-(pyridoxal phosphate)lysine.

The protein belongs to the class-II pyridoxal-phosphate-dependent aminotransferase family. Histidinol-phosphate aminotransferase subfamily. In terms of assembly, homodimer. It depends on pyridoxal 5'-phosphate as a cofactor.

It carries out the reaction L-histidinol phosphate + 2-oxoglutarate = 3-(imidazol-4-yl)-2-oxopropyl phosphate + L-glutamate. The protein operates within amino-acid biosynthesis; L-histidine biosynthesis; L-histidine from 5-phospho-alpha-D-ribose 1-diphosphate: step 7/9. The protein is Histidinol-phosphate aminotransferase of Aliivibrio fischeri (strain ATCC 700601 / ES114) (Vibrio fischeri).